The primary structure comprises 305 residues: MPSQSDLDRQIEHLMDCKPLPEEVRTLCDQARTILVEEWNVQPVKCPVTVCGDIHGQFHDLLELFRIGGSAPDTNYLFMGDYVDRGYYSVETVTLLVALKVRYRDRITILRGNHESRQITQVYGFFDECLRKYGNANVWKHFTDLFDYLPLTALIESQIFCLHGGLSPSLDTLDNIRALDRIQEVPHEGPMCDLLWSDPDDRCGWGISPRGAGYTFGQDIAAQFNHTNGLSLISRAHQLVMEGYNWSQENNVVTIFSAPNYCYRCGNMAAILEVGENMDQNFLQFDPAPRQVEPDVARRTPDYFL.

Mn(2+) is bound by residues aspartate 53, histidine 55, aspartate 81, and asparagine 113. The active-site Proton donor is histidine 114. Positions 163 and 237 each coordinate Mn(2+).

The protein belongs to the PPP phosphatase family. PP-2A subfamily. It depends on Mn(2+) as a cofactor.

It catalyses the reaction O-phospho-L-seryl-[protein] + H2O = L-seryl-[protein] + phosphate. The catalysed reaction is O-phospho-L-threonyl-[protein] + H2O = L-threonyl-[protein] + phosphate. The chain is Serine/threonine-protein phosphatase PP2A catalytic subunit from Helianthus annuus (Common sunflower).